An 88-amino-acid chain; its full sequence is Large ribosomal subunit protein bL31 (88 aa).

The segment at 67–88 is disordered; the sequence is MGSVDNATSEKKSATDETSKES. Basic and acidic residues predominate over residues 74–88; it reads TSEKKSATDETSKES.

Belongs to the bacterial ribosomal protein bL31 family. Type A subfamily. Part of the 50S ribosomal subunit.

Binds the 23S rRNA. In Synechococcus sp. (strain CC9311), this protein is Large ribosomal subunit protein bL31.